Consider the following 106-residue polypeptide: YcgL domain-containing protein PsycPRwf_1721 (106 aa).

Positions 1 to 94 (MHCDIYKFPK…PSDVLLAQAQ (94 aa)) constitute a YcgL domain.

The polypeptide is YcgL domain-containing protein PsycPRwf_1721 (Psychrobacter sp. (strain PRwf-1)).